We begin with the raw amino-acid sequence, 180 residues long: Napin (180 aa).

Positions 1–21 (MANKLFLVSATLAFFFLLTNA) are cleaved as a signal peptide. 2 consecutive propeptides follow at residues 22-38 (SIYRTIVEVDEDDATNP) and 75-94 (PSWTLDGEFDFEDDMENPQG).

This sequence belongs to the 2S seed storage albumins family. As to quaternary structure, the mature protein consists of a small and a large chain linked by disulfide bonds. In terms of tissue distribution, cotyledons and the axis.

In terms of biological role, the small, basic, water-soluble napins are one of the two major kinds of storage proteins synthesized in the seed during its maturation. The protein is Napin (NAP1) of Brassica napus (Rape).